Consider the following 332-residue polypeptide: Glycerol-3-phosphate dehydrogenase [NAD(P)+] (332 aa).

NADPH is bound by residues Trp11, Arg30, and Lys108. Lys108, Gly137, and Ser139 together coordinate sn-glycerol 3-phosphate. Residue Ala141 coordinates NADPH. Residues Lys192, Asp245, Ser255, Arg256, and Asn257 each coordinate sn-glycerol 3-phosphate. The active-site Proton acceptor is the Lys192. An NADPH-binding site is contributed by Arg256. Residues Val280 and Glu282 each coordinate NADPH.

It belongs to the NAD-dependent glycerol-3-phosphate dehydrogenase family.

The protein localises to the cytoplasm. The catalysed reaction is sn-glycerol 3-phosphate + NAD(+) = dihydroxyacetone phosphate + NADH + H(+). It carries out the reaction sn-glycerol 3-phosphate + NADP(+) = dihydroxyacetone phosphate + NADPH + H(+). The protein operates within membrane lipid metabolism; glycerophospholipid metabolism. In terms of biological role, catalyzes the reduction of the glycolytic intermediate dihydroxyacetone phosphate (DHAP) to sn-glycerol 3-phosphate (G3P), the key precursor for phospholipid synthesis. The polypeptide is Glycerol-3-phosphate dehydrogenase [NAD(P)+] (Burkholderia mallei (strain ATCC 23344)).